We begin with the raw amino-acid sequence, 281 residues long: Voltage-dependent L-type calcium channel subunit alpha-1S (281 aa).

One copy of the III repeat lies at 1 to 8 (VGFVIVTF). Residues 1-17 (VGFVIVTFQEQGESEYK) are dihydropyridine binding. One copy of the IV repeat lies at 45–281 (NPYQYQIWYV…TCGTGFAYFY (237 aa)). The chain crosses the membrane as a helical span at residues 59–80 (YFEYLMFFLIMLNTICLGMQHY). Asn81 carries an N-linked (GlcNAc...) asparagine glycan. The helical transmembrane segment at 89 to 110 (VSDILNVAFTVLFTLEMILKLM) threads the bilayer. The helical transmembrane segment at 121 to 140 (PWNVFDFLIVIGSIIDVILS) threads the bilayer. A helical membrane pass occupies residues 153 to 171 (ITFFRLFRVMRLVKLLSRG). A helical membrane pass occupies residues 190–210 (YVALLIVMLFFIYAVIGMQMF). Positions 233 to 251 (AVLLLFRCATGEAWQEILL) form an intramembrane region, pore-forming. Residues 242–245 (TGEA) carry the Selectivity filter of repeat IV motif. The interval 258–281 (RCDPESDYAEGEEYTCGTGFAYFY) is dihydropyridine binding. Cys259 and Cys273 are disulfide-bonded. Residues 270–281 (EYTCGTGFAYFY) form a phenylalkylamine binding region.

This sequence belongs to the calcium channel alpha-1 subunit (TC 1.A.1.11) family. CACNA1S subfamily. As to quaternary structure, component of a calcium channel complex consisting of a pore-forming alpha subunit (CACNA1S) and the ancillary subunits CACNB1 or CACNB2, CACNG1 and CACNA2D1. The channel complex contains alpha, beta, gamma and delta subunits in a 1:1:1:1 ratio, i.e. it contains either CACNB1 or CACNB2. CACNA1S channel activity is modulated by the auxiliary subunits (CACNB1 or CACNB2, CACNG1 and CACNA2D1). Interacts with DYSF and JSRP1. Interacts with RYR1. Interacts with CALM. The alpha-1S subunit is found in two isoforms in the skeletal muscle: a minor form of 212 kDa containing the complete amino acid sequence, and a major form of 190 kDa derived from the full-length form by post-translational proteolysis close to Phe-1690. Post-translationally, both the minor and major forms are phosphorylated in vitro by PKA. Phosphorylation by PKA activates the calcium channel.

The protein resides in the cell membrane. It localises to the sarcolemma. The protein localises to the T-tubule. The enzyme catalyses Ca(2+)(in) = Ca(2+)(out). Its activity is regulated as follows. Channel activity is blocked by dihydropyridines (DHP), phenylalkylamines, and by benzothiazepines. Functionally, pore-forming, alpha-1S subunit of the voltage-gated calcium channel that gives rise to L-type calcium currents in skeletal muscle. Calcium channels containing the alpha-1S subunit play an important role in excitation-contraction coupling in skeletal muscle via their interaction with RYR1, which triggers Ca(2+) release from the sarcplasmic reticulum and ultimately results in muscle contraction. Long-lasting (L-type) calcium channels belong to the 'high-voltage activated' (HVA) group. The sequence is that of Voltage-dependent L-type calcium channel subunit alpha-1S (CACNA1S) from Gallus gallus (Chicken).